An 815-amino-acid polypeptide reads, in one-letter code: BTB/POZ domain-containing protein KCTD3 (815 aa).

One can recognise a BTB domain in the interval 18–87; it reads EIVQLNVGGT…LRTKELDLRG (70 aa). The span at 139 to 168 shows a compositional bias: polar residues; that stretch reads INNTVRSADSRNGLNSTEGEARGNGTQPVL. Residues 139 to 170 form a disordered region; sequence INNTVRSADSRNGLNSTEGEARGNGTQPVLSG. WD repeat units follow at residues 174–218, 224–263, 270–305, 310–342, 354–404, 412–449, 457–504, and 510–569; these read ETVR…GWQQ, YLDWTIERVALNAKVVGGPHGDKDKMVAVASESSIILWSV, SEIGVFSLGVPVDALFFIGNQLVATSHTGKVGVWNA, WQVQDVVPITSYDTAGSFLLLGCNNGSIYYIDM, LLVT…VQHP, QLFQTFTVHRSPVTKIMLSEKHLVSVCADNNHVRTWTV, STQP…IQKV, and KLFV…MWDL. The segment at 512–815 is interaction with HCN3; that stretch reads FVRLSSTGKR…SDSSGQEYSL (304 aa). Phosphoserine is present on residues Ser604, Ser664, and Ser711. Over residues 736–758 the composition is skewed to basic and acidic residues; that stretch reads SESKKRSSEDENENKIEFRKKGG. The segment at 736-815 is disordered; the sequence is SESKKRSSED…SDSSGQEYSL (80 aa). Positions 774 to 800 are enriched in low complexity; the sequence is ASSPSTSDGGTDSPGTASPSPTKTTPS. Ser793 carries the post-translational modification Phosphoserine.

This sequence belongs to the KCTD3 family. As to quaternary structure, interacts with HCN3. As to expression, broadly expressed in normal tissues.

The protein resides in the cell membrane. Accessory subunit of potassium/sodium hyperpolarization-activated cyclic nucleotide-gated channel 3 (HCN3) up-regulating its cell-surface expression and current density without affecting its voltage dependence and kinetics. The polypeptide is BTB/POZ domain-containing protein KCTD3 (KCTD3) (Homo sapiens (Human)).